The following is an 883-amino-acid chain: MRFTRLSLSNFKCYADAAVSLDPGVTVIHGLNGSGKSSLLDACFFALYGTTALDTTLADAVTIGAETAEIDLHFEHAGGDYHVHRRIRASGGRAQTAACVLETPTDRIDGVTDVEAHISGLLRMDAEAFVNCAYVRQGEVNKLINAAPSTRQDMIDALLQLGKLEEYRQRAGDARLGVEDVKSNVEGQLDRLADQIADKEAADPHDRLASHNTALAEVTADIEHFEAEREQARQTRDDAADVLERYEESRTALADVEETIADVREAVAEAERERETLADRVSDHRERASDLDDEAAALAADLGLDDPDAEDASAERDAVADQREAVAERVREVAPAVSRLTEQADSAADDAATLDERAETLREEAAALDAEADDAAAKRDDAAARIEALDADIEAAMAAFDDAPVAFGAAEAFLDDATAERDELRERVATLRADRQSAADRVAEAEALLDEGKCPECGQPVEGAPHVERVTDDRERVAELDAELADVEDELDAVAQRVDRGESLVAAEDRVDDLEQQRERAVERRDEQADIADAKRDQAAEKRDRAADLDAEAEDARADAAAKRDAADEKRETLAALNADQTALKERLDALADLVDRLEAAADAREAAQRLAEKRAALAAQNEQRRDRLSELRERKRTLDSEFDADRIETARADKDRAEDYLEQVEPKLQALREDRDDLQAKIGAAENAIAELESLREEHERVQSRHQDLQAVHDEVTALETMYGELRAELRQQNVSKLERLLNETFELVYQNDSYARIELSGEYELTVYQKDGEPLEPAQLSGGERALFNLSLRTAVYRLLAEGIEGDAPLPPLILDEPTVFLDSGHVSQLVELVESMRRLGVEQIVVVSHDDELVAAADDVVRVAKDATSNRSRVSTPEHI.

ATP-binding positions include lysine 12, 32-38 (NGSGKSS), and glutamine 137. A coiled-coil region spans residues 244 to 283 (ERYEESRTALADVEETIADVREAVAEAERERETLADRVSD). Disordered stretches follow at residues 271–290 (ERERETLADRVSDHRERASD) and 305–326 (DDPDAEDASAERDAVADQREAV). Basic and acidic residues predominate over residues 313 to 326 (SAERDAVADQREAV). Coiled coils occupy residues 336–389 (AVSR…IEAL) and 414–452 (LDDATAERDELRERVATLRADRQSAADRVAEAEALLDEG). The Zinc-hook domain occupies 407 to 506 (FGAAEAFLDD…RVDRGESLVA (100 aa)). 2 residues coordinate Zn(2+): cysteine 454 and cysteine 457. A disordered region spans residues 508-565 (EDRVDDLEQQRERAVERRDEQADIADAKRDQAAEKRDRAADLDAEAEDARADAAAKRD). 2 coiled-coil regions span residues 571-604 (RETLAALNADQTALKERLDALADLVDRLEAAADA) and 668-720 (KLQA…VTAL).

This sequence belongs to the SMC family. RAD50 subfamily. As to quaternary structure, homodimer. Forms a heterotetramer composed of two Mre11 subunits and two Rad50 subunits. Zn(2+) is required as a cofactor.

Its function is as follows. Part of the Rad50/Mre11 complex, which is involved in the early steps of DNA double-strand break (DSB) repair. Rad50 controls the balance between DNA end bridging and DNA resection via ATP-dependent structural rearrangements of the Rad50/Mre11 complex. In Halobacterium salinarum (strain ATCC 700922 / JCM 11081 / NRC-1) (Halobacterium halobium), this protein is DNA double-strand break repair Rad50 ATPase.